We begin with the raw amino-acid sequence, 125 residues long: Protein ApaG (125 aa).

The region spanning 1-125 (MNDTPRVCVQ…FRLAIATHIH (125 aa)) is the ApaG domain.

This Erwinia tasmaniensis (strain DSM 17950 / CFBP 7177 / CIP 109463 / NCPPB 4357 / Et1/99) protein is Protein ApaG.